A 284-amino-acid chain; its full sequence is MSQEISRNWPAPAKLNLFLHINGRRSDGYHELQTLFQFVDCCDQLDFRVTDTPELILHSTMSAVVADSDNLILRAAKSLQQATGFNGGAEIWLDKRLPMGGGLGGGSSDAATTLVALNRLWNTQLSHDELAAIGLKLGADIPVFIHGFAAFAQGVGERLQAVNPAELWYLVIAPDAHVSTAAVFQDPLLPRNTPKLGLDTLLSQPWANDCQELVVSKYPQVAKALGWLLEYAPSRMTGTGACVFGEFSSQQQALAALAKLPSDMQGFVAKGMNISPLIVRLNRP.

Lys-14 is a catalytic residue. 98–108 (PMGGGLGGGSS) lines the ATP pocket. Asp-140 is a catalytic residue.

This sequence belongs to the GHMP kinase family. IspE subfamily.

It catalyses the reaction 4-CDP-2-C-methyl-D-erythritol + ATP = 4-CDP-2-C-methyl-D-erythritol 2-phosphate + ADP + H(+). Its pathway is isoprenoid biosynthesis; isopentenyl diphosphate biosynthesis via DXP pathway; isopentenyl diphosphate from 1-deoxy-D-xylulose 5-phosphate: step 3/6. Its function is as follows. Catalyzes the phosphorylation of the position 2 hydroxy group of 4-diphosphocytidyl-2C-methyl-D-erythritol. The chain is 4-diphosphocytidyl-2-C-methyl-D-erythritol kinase from Shewanella oneidensis (strain ATCC 700550 / JCM 31522 / CIP 106686 / LMG 19005 / NCIMB 14063 / MR-1).